The primary structure comprises 1726 residues: Protein NLRC5 (1726 aa).

The 331-residue stretch at 207–537 folds into the NACHT domain; the sequence is RVVMLSGQAG…THLTIQEFMA (331 aa). Residue 213–220 participates in ATP binding; that stretch reads GQAGSGKT. LRR repeat units lie at residues 879–902, 904–925, 1002–1025, 1026–1048, 1103–1126, 1128–1155, 1212–1235, 1351–1374, 1387–1411, 1421–1443, 1447–1468, 1502–1525, 1532–1553, 1560–1580, 1588–1609, 1616–1637, 1642–1662, and 1670–1691; these read LTVL…EHLP, LDTI…VVLL, NLDF…LPNM, ASLN…LLVQ, CHHL…TFVQ, LPKL…LLSL, LNSV…YLIT, AEFL…SKGE, AQKH…VLGN, SLSL…RGLV, SLEE…CFAQ, LIEL…ELVK, RLRK…MLVK, ALQQ…AVLG, ELTE…SVCE, ALKK…ASCL, SIED…LKLA, and KLKR…ALAT.

The protein belongs to the NLRP family.

Its subcellular location is the cytoplasm. Probable regulator of the NF-kappa-B and type I interferon signaling pathways. May also regulate the type II interferon signaling pathway. Plays a role in homeostatic control of innate immunity and in antiviral defense mechanisms. This chain is Protein NLRC5 (nlrc5), found in Ictalurus punctatus (Channel catfish).